A 365-amino-acid polypeptide reads, in one-letter code: MTELKKTPLFDLYEQYGGKVIDFGGWALPVQFSSIKEEHEAVRTKAGLFDVSHMGEVEVTGAQALNYLQRLVTNDVSKIKDGQAQYTAMCYENGGTVDDLLIYRRSEDQYLLVINAANIDKDIAWMEKHAIDGVSITNVSNQTAQLALQGPVAENVLQTLTEEPLADIKFFRFVDGVNIAGVNVLLSRTGYTGEDGFELYCLAEDAPVLWKKLIEAGKEHGVVPCGLGARDTLRFEAKLPLYGQELTKDISPIEAGIGFAVKVDKEDFIGKEILKKQKEQGAPRKLVGLEMVDKGIPRTGYEVYVDNQKIGFVTTGTQSPTLKKNVGLALLQAEHSELGTEVIVHVRKRQLIAKVVATPFYKRGN.

It belongs to the GcvT family. As to quaternary structure, the glycine cleavage system is composed of four proteins: P, T, L and H.

The enzyme catalyses N(6)-[(R)-S(8)-aminomethyldihydrolipoyl]-L-lysyl-[protein] + (6S)-5,6,7,8-tetrahydrofolate = N(6)-[(R)-dihydrolipoyl]-L-lysyl-[protein] + (6R)-5,10-methylene-5,6,7,8-tetrahydrofolate + NH4(+). Its function is as follows. The glycine cleavage system catalyzes the degradation of glycine. The chain is Aminomethyltransferase from Halalkalibacterium halodurans (strain ATCC BAA-125 / DSM 18197 / FERM 7344 / JCM 9153 / C-125) (Bacillus halodurans).